A 408-amino-acid chain; its full sequence is Aspartate aminotransferase, cytoplasmic (408 aa).

3 residues coordinate L-aspartate: Gly36, Trp133, and Asn187. Lys251 is modified (N6-(pyridoxal phosphate)lysine). Position 379 (Arg379) interacts with L-aspartate.

This sequence belongs to the class-I pyridoxal-phosphate-dependent aminotransferase family. Homodimer. Requires pyridoxal 5'-phosphate as cofactor. Expressed in all somatic tissues including the nervous system.

The protein localises to the cytoplasm. The catalysed reaction is L-aspartate + 2-oxoglutarate = oxaloacetate + L-glutamate. Its function is as follows. Biosynthesis of L-glutamate from L-aspartate. Important regulator of levels of glutamate, the major excitatory neurotransmitter of the central nervous system. The sequence is that of Aspartate aminotransferase, cytoplasmic from Caenorhabditis elegans.